Here is a 323-residue protein sequence, read N- to C-terminus: tRNA U34 carboxymethyltransferase (323 aa).

Carboxy-S-adenosyl-L-methionine is bound by residues Lys91, Trp105, Lys110, Gly130, 181–182 (IE), Met196, Tyr200, and Arg315.

This sequence belongs to the class I-like SAM-binding methyltransferase superfamily. CmoB family. As to quaternary structure, homotetramer.

The enzyme catalyses carboxy-S-adenosyl-L-methionine + 5-hydroxyuridine(34) in tRNA = 5-carboxymethoxyuridine(34) in tRNA + S-adenosyl-L-homocysteine + H(+). Catalyzes carboxymethyl transfer from carboxy-S-adenosyl-L-methionine (Cx-SAM) to 5-hydroxyuridine (ho5U) to form 5-carboxymethoxyuridine (cmo5U) at position 34 in tRNAs. This chain is tRNA U34 carboxymethyltransferase, found in Yersinia pseudotuberculosis serotype O:3 (strain YPIII).